Here is a 350-residue protein sequence, read N- to C-terminus: Heat-inducible transcription repressor HrcA (350 aa).

It belongs to the HrcA family.

Negative regulator of class I heat shock genes (grpE-dnaK-dnaJ and groELS operons). Prevents heat-shock induction of these operons. This chain is Heat-inducible transcription repressor HrcA, found in Xanthomonas axonopodis pv. citri (strain 306).